Consider the following 286-residue polypeptide: 33 kDa chaperonin (286 aa).

Disulfide bonds link Cys-225-Cys-227 and Cys-258-Cys-261.

It belongs to the HSP33 family. In terms of processing, under oxidizing conditions two disulfide bonds are formed involving the reactive cysteines. Under reducing conditions zinc is bound to the reactive cysteines and the protein is inactive.

The protein localises to the cytoplasm. Functionally, redox regulated molecular chaperone. Protects both thermally unfolding and oxidatively damaged proteins from irreversible aggregation. Plays an important role in the bacterial defense system toward oxidative stress. This Shewanella oneidensis (strain ATCC 700550 / JCM 31522 / CIP 106686 / LMG 19005 / NCIMB 14063 / MR-1) protein is 33 kDa chaperonin.